Reading from the N-terminus, the 190-residue chain is Crossover junction endodeoxyribonuclease RuvC (190 aa).

Active-site residues include aspartate 8, glutamate 67, and aspartate 139. Mg(2+) contacts are provided by aspartate 8, glutamate 67, and aspartate 139.

It belongs to the RuvC family. In terms of assembly, homodimer which binds Holliday junction (HJ) DNA. The HJ becomes 2-fold symmetrical on binding to RuvC with unstacked arms; it has a different conformation from HJ DNA in complex with RuvA. In the full resolvosome a probable DNA-RuvA(4)-RuvB(12)-RuvC(2) complex forms which resolves the HJ. Mg(2+) is required as a cofactor.

It localises to the cytoplasm. The enzyme catalyses Endonucleolytic cleavage at a junction such as a reciprocal single-stranded crossover between two homologous DNA duplexes (Holliday junction).. Its function is as follows. The RuvA-RuvB-RuvC complex processes Holliday junction (HJ) DNA during genetic recombination and DNA repair. Endonuclease that resolves HJ intermediates. Cleaves cruciform DNA by making single-stranded nicks across the HJ at symmetrical positions within the homologous arms, yielding a 5'-phosphate and a 3'-hydroxyl group; requires a central core of homology in the junction. The consensus cleavage sequence is 5'-(A/T)TT(C/G)-3'. Cleavage occurs on the 3'-side of the TT dinucleotide at the point of strand exchange. HJ branch migration catalyzed by RuvA-RuvB allows RuvC to scan DNA until it finds its consensus sequence, where it cleaves and resolves the cruciform DNA. This chain is Crossover junction endodeoxyribonuclease RuvC, found in Haemophilus influenzae (strain ATCC 51907 / DSM 11121 / KW20 / Rd).